The primary structure comprises 701 residues: Elongation factor G (701 aa).

Residues 11 to 287 (NKVRNIGIMA…AVVDYLPSPL (277 aa)) form the tr-type G domain. Residues 20-27 (AHIDAGKT), 84-88 (DTPGH), and 138-141 (NKMD) each bind GTP.

This sequence belongs to the TRAFAC class translation factor GTPase superfamily. Classic translation factor GTPase family. EF-G/EF-2 subfamily.

The protein resides in the cytoplasm. In terms of biological role, catalyzes the GTP-dependent ribosomal translocation step during translation elongation. During this step, the ribosome changes from the pre-translocational (PRE) to the post-translocational (POST) state as the newly formed A-site-bound peptidyl-tRNA and P-site-bound deacylated tRNA move to the P and E sites, respectively. Catalyzes the coordinated movement of the two tRNA molecules, the mRNA and conformational changes in the ribosome. The protein is Elongation factor G of Mycobacterium sp. (strain JLS).